Here is a 765-residue protein sequence, read N- to C-terminus: Phosphoribosylformylglycinamidine synthase subunit PurL (765 aa).

A compositionally biased stretch (polar residues) spans 1-13 (MTVSPTSAPTQAI). Residues 1–32 (MTVSPTSAPTQAIDTVERAATTPDEPQPFGEL) form a disordered region. His-65 is an active-site residue. Residues Tyr-68 and Lys-112 each coordinate ATP. Glu-114 lines the Mg(2+) pocket. Substrate is bound by residues 115–118 (SHNH) and Arg-137. Catalysis depends on His-116, which acts as the Proton acceptor. Mg(2+) is bound at residue Asp-138. Residue Gln-263 coordinates substrate. Asp-291 provides a ligand contact to Mg(2+). Substrate is bound at residue 335–337 (ESQ). Residues Asn-523 and Gly-560 each contribute to the ATP site. Residue Asn-561 coordinates Mg(2+). Ser-563 lines the substrate pocket.

The protein belongs to the FGAMS family. As to quaternary structure, monomer. Part of the FGAM synthase complex composed of 1 PurL, 1 PurQ and 2 PurS subunits.

It localises to the cytoplasm. The enzyme catalyses N(2)-formyl-N(1)-(5-phospho-beta-D-ribosyl)glycinamide + L-glutamine + ATP + H2O = 2-formamido-N(1)-(5-O-phospho-beta-D-ribosyl)acetamidine + L-glutamate + ADP + phosphate + H(+). Its pathway is purine metabolism; IMP biosynthesis via de novo pathway; 5-amino-1-(5-phospho-D-ribosyl)imidazole from N(2)-formyl-N(1)-(5-phospho-D-ribosyl)glycinamide: step 1/2. Functionally, part of the phosphoribosylformylglycinamidine synthase complex involved in the purines biosynthetic pathway. Catalyzes the ATP-dependent conversion of formylglycinamide ribonucleotide (FGAR) and glutamine to yield formylglycinamidine ribonucleotide (FGAM) and glutamate. The FGAM synthase complex is composed of three subunits. PurQ produces an ammonia molecule by converting glutamine to glutamate. PurL transfers the ammonia molecule to FGAR to form FGAM in an ATP-dependent manner. PurS interacts with PurQ and PurL and is thought to assist in the transfer of the ammonia molecule from PurQ to PurL. The polypeptide is Phosphoribosylformylglycinamidine synthase subunit PurL (Mycobacterium avium (strain 104)).